The following is a 465-amino-acid chain: A-type ATP synthase subunit B (465 aa).

The protein belongs to the ATPase alpha/beta chains family. In terms of assembly, the A-type ATPase is composed of subunits A(3), B(3), C, D, E(1 or 2), F, H(2), I and proteolipid K(x).

The protein resides in the cell membrane. In terms of biological role, component of the A-type ATP synthase that produces ATP from ADP in the presence of a proton gradient across the membrane. The B chain is a regulatory subunit. The protein is A-type ATP synthase subunit B of Methanocaldococcus jannaschii (strain ATCC 43067 / DSM 2661 / JAL-1 / JCM 10045 / NBRC 100440) (Methanococcus jannaschii).